The following is a 142-amino-acid chain: Large ribosomal subunit protein uL13 (142 aa).

The protein belongs to the universal ribosomal protein uL13 family. As to quaternary structure, part of the 50S ribosomal subunit.

Functionally, this protein is one of the early assembly proteins of the 50S ribosomal subunit, although it is not seen to bind rRNA by itself. It is important during the early stages of 50S assembly. The sequence is that of Large ribosomal subunit protein uL13 from Hydrogenovibrio crunogenus (strain DSM 25203 / XCL-2) (Thiomicrospira crunogena).